The following is a 455-amino-acid chain: MAWSPRHSAGRRLQLPLLCLLLQGATAILFAVFVRYNRETDAALWHWGNHSNADNEFYFRYPSFQDVHAMIFVGFGFLMVFLQRYGFGSVGFTFLLAAFALQWSTLIQGFFHSFRGGYILVGMESMINADFCAGAVLISFGAVLGKTGPVQLLLMALLEVVLFGLNEFVLLSLLEVKDAGGSMTIHTFGAYFGLILSRVLYRPQLEKSKHRQGSVYHSDLFAMIGTIFLWIFWPSFNSAPTALGDGQHRTALNTYYSLTASTLSTFALSALVGGDGRLDMVHVQNAALAGGVVVGTSAEMMLTPFGALAAGFLAGAISTLGYKFVTPILESKLKVQDTCGVHNLHGMPGVLGALLGGLVAGLATREAYGDGLESVFPLIAEGQRSATSQAMHQLFGLFVTLTFASVGGGLGGLLLRLPILDSPPDSQCYEDQIYWEVPGEHEHLAQGSEETETQA.

Topologically, residues 1–13 (MAWSPRHSAGRRL) are cytoplasmic. The helical transmembrane segment at 14–34 (QLPLLCLLLQGATAILFAVFV) threads the bilayer. At 35-61 (RYNRETDAALWHWGNHSNADNEFYFRY) the chain is on the extracellular side. Asn-49 carries an N-linked (GlcNAc...) asparagine glycan. A helical transmembrane segment spans residues 62 to 82 (PSFQDVHAMIFVGFGFLMVFL). Residues 83–86 (QRYG) lie on the Cytoplasmic side of the membrane. The helical transmembrane segment at 87 to 107 (FGSVGFTFLLAAFALQWSTLI) threads the bilayer. At 108–124 (QGFFHSFRGGYILVGME) the chain is on the extracellular side. The helical transmembrane segment at 125–145 (SMINADFCAGAVLISFGAVLG) threads the bilayer. At 146-151 (KTGPVQ) the chain is on the cytoplasmic side. Residues 152–172 (LLLMALLEVVLFGLNEFVLLS) traverse the membrane as a helical segment. Residues 173–179 (LLEVKDA) lie on the Extracellular side of the membrane. A helical membrane pass occupies residues 180-200 (GGSMTIHTFGAYFGLILSRVL). Residues 201-219 (YRPQLEKSKHRQGSVYHSD) lie on the Cytoplasmic side of the membrane. A helical transmembrane segment spans residues 220-240 (LFAMIGTIFLWIFWPSFNSAP). Topologically, residues 241–253 (TALGDGQHRTALN) are extracellular. A helical membrane pass occupies residues 254–274 (TYYSLTASTLSTFALSALVGG). Residues 275–277 (DGR) lie on the Cytoplasmic side of the membrane. A helical transmembrane segment spans residues 278 to 298 (LDMVHVQNAALAGGVVVGTSA). Position 299 (Glu-299) is a topological domain, extracellular. A helical membrane pass occupies residues 300-320 (MMLTPFGALAAGFLAGAISTL). Residues 321–343 (GYKFVTPILESKLKVQDTCGVHN) are Cytoplasmic-facing. The chain crosses the membrane as a helical span at residues 344-364 (LHGMPGVLGALLGGLVAGLAT). At 365–393 (REAYGDGLESVFPLIAEGQRSATSQAMHQ) the chain is on the extracellular side. A helical transmembrane segment spans residues 394–414 (LFGLFVTLTFASVGGGLGGLL). Residues 415-455 (LRLPILDSPPDSQCYEDQIYWEVPGEHEHLAQGSEETETQA) are Cytoplasmic-facing. The tract at residues 416–424 (RLPILDSPP) is interaction with ANK3. Positions 429-432 (YEDQ) match the Basolateral sorting signal motif.

Belongs to the ammonium transporter (TC 2.A.49) family. Rh subfamily. In terms of assembly, interacts (via C-terminus) with ANK2 and ANK3; required for targeting to the basolateral membrane. Post-translationally, N-glycosylated.

Its subcellular location is the cell membrane. It is found in the basolateral cell membrane. The catalysed reaction is NH4(+)(in) = NH4(+)(out). It catalyses the reaction methylamine(out) = methylamine(in). The enzyme catalyses CO2(out) = CO2(in). In terms of biological role, ammonium transporter involved in the maintenance of acid-base homeostasis. Transports ammonium and its related derivative methylammonium across the basolateral plasma membrane of epithelial cells likely contributing to renal transepithelial ammonia transport and ammonia metabolism. May transport either NH4(+) or NH3 ammonia species predominantly mediating an electrogenic NH4(+) transport. May act as a CO2 channel providing for renal acid secretion. The polypeptide is Ammonium transporter Rh type B (RHBG) (Bos taurus (Bovine)).